A 136-amino-acid chain; its full sequence is Histone H3 (136 aa).

Residues 1-43 are disordered; sequence MARTKQTARKSTGGKAPRKQLATKAARKSAPASGGVKKPHRFR. Lys-5 carries the N6-methylated lysine modification. Lys-10 is modified (N6-acetyllysine; alternate). Lys-10 bears the N6-methylated lysine; alternate mark. Ser-11 bears the Phosphoserine mark. The residue at position 12 (Thr-12) is a Phosphothreonine. Position 15 is an N6-acetyllysine (Lys-15). Residues Lys-19 and Lys-24 each carry the N6-acetyllysine; alternate modification. Residues Lys-19 and Lys-24 each carry the N6-methylated lysine; alternate modification. Position 28 is an N6-methylated lysine (Lys-28). Ser-29 bears the Phosphoserine mark. The residue at position 37 (Lys-37) is an N6-methylated lysine.

Belongs to the histone H3 family. As to quaternary structure, the nucleosome is a histone octamer containing two molecules each of H2A, H2B, H3 and H4 assembled in one H3-H4 heterotetramer and two H2A-H2B heterodimers. The octamer wraps approximately 147 bp of DNA. Acetylation is generally linked to gene activation. Can be acetylated to form H3K9ac, H3K14ac, H3K18ac and H3K23ac. H3K9ac could compete with H3K9me and prevent gene silencing. H3K9ac is restricted to euchromatin. In terms of processing, methylated to form mainly H3K4me, H3K9me, H3K18me, H3K23me, H3K27me and H3K36me. H3K4me1/2/3, H3K9me3, H3K27me3 and H3K36me1/2/3 are typical marks for euchromatin, whereas heterochromatic chromocenters are enriched in H3K9me1/2 and H3K27me1/2. H2BK143ub1 is probably prerequisite for H3K4me. Post-translationally, can be phosphorylated to form H3S10ph, H3T11ph and H3S28ph.

The protein resides in the nucleus. It localises to the chromosome. In terms of biological role, core component of nucleosome. Nucleosomes wrap and compact DNA into chromatin, limiting DNA accessibility to the cellular machineries which require DNA as a template. Histones thereby play a central role in transcription regulation, DNA repair, DNA replication and chromosomal stability. DNA accessibility is regulated via a complex set of post-translational modifications of histones, also called histone code, and nucleosome remodeling. The protein is Histone H3 of Griffithsia japonica (Red alga).